Consider the following 318-residue polypeptide: Malonyl CoA-acyl carrier protein transacylase, mitochondrial (318 aa).

This sequence belongs to the FabD family.

The protein resides in the mitochondrion. It catalyses the reaction holo-[ACP] + malonyl-CoA = malonyl-[ACP] + CoA. Its pathway is lipid metabolism; fatty acid biosynthesis. Functionally, involved in biosynthesis of fatty acids in mitochondria. The protein is Malonyl CoA-acyl carrier protein transacylase, mitochondrial (mct1) of Schizosaccharomyces pombe (strain 972 / ATCC 24843) (Fission yeast).